Consider the following 329-residue polypeptide: NADH-quinone oxidoreductase subunit H (329 aa).

Helical transmembrane passes span 9–29 (LIKILILVAVFSALGGFATYI), 42–62 (GPCYVGPFGLLQVAADGIKLF), 75–95 (FIFTLAPIIAMVSAFVSMAPI), 117–137 (IGFLFFLAVGAAGIYAPILAG), 154–174 (IQLLSFEVVSTLTILAPLMVV), 188–208 (GGFLDWLVFKQPLAFVLFLIA), 238–258 (LKWGMFFLAEYAHLFAFSFVI), 269–291 (WGFIPGGIAILIKAGFFVFLSMW), and 309–329 (WKIMLPLALLNIVLTGIIILI).

It belongs to the complex I subunit 1 family. NDH-1 is composed of 14 different subunits. Subunits NuoA, H, J, K, L, M, N constitute the membrane sector of the complex.

The protein localises to the cell inner membrane. The catalysed reaction is a quinone + NADH + 5 H(+)(in) = a quinol + NAD(+) + 4 H(+)(out). NDH-1 shuttles electrons from NADH, via FMN and iron-sulfur (Fe-S) centers, to quinones in the respiratory chain. The immediate electron acceptor for the enzyme in this species is believed to be ubiquinone. Couples the redox reaction to proton translocation (for every two electrons transferred, four hydrogen ions are translocated across the cytoplasmic membrane), and thus conserves the redox energy in a proton gradient. This subunit may bind ubiquinone. This chain is NADH-quinone oxidoreductase subunit H, found in Helicobacter pylori (strain Shi470).